The following is a 971-amino-acid chain: Reversion-inducing cysteine-rich protein with Kazal motifs (971 aa).

An N-terminal signal peptide occupies residues 1-22 (MASVRASPRSALLLLLAAAGVA). A Knot 1 repeat occupies 37–84 (CCNHSKDNQMCRDVCEQIFSSKSESRLKHLLQRAPDYCPETMVEIWSC). Residues 37 to 338 (CCNHSKDNQM…NPVEVSMLTC (302 aa)) form a 5 X Knot repeats region. N-linked (GlcNAc...) asparagine glycans are attached at residues Asn-39 and Asn-86. Knot repeat units follow at residues 104–141 (CCELAIGLECRQACKQASSKNDISKVCRKEYENALFSC) and 151–197 (CCSY…LIHC). An N-linked (GlcNAc...) asparagine glycan is attached at Asn-200. 2 Knot repeats span residues 216-263 (CCDR…LWQC) and 292-338 (CCSK…MLTC). N-linked (GlcNAc...) asparagine glycans are attached at residues Asn-297 and Asn-352. Kazal-like domains follow at residues 627–673 (TFTG…PCIS), 698–752 (TFDK…PCQP), and 753–789 (FCRAKEPVCGHNGETYSSVCAAYSDRVAVDYYGPCQA). Intrachain disulfides connect Cys-633/Cys-658, Cys-635/Cys-654, Cys-643/Cys-671, Cys-716/Cys-735, Cys-724/Cys-750, and Cys-761/Cys-787. In terms of domain architecture, Kazal-like 2; degenerate spans 704–750 (CSQYECVPRQLTCDQARDPVCDTDHMEHSNLCTLYQRGKSLSYRGPC). Ser-942 carries the GPI-anchor amidated serine lipid modification. A propeptide spans 943–971 (SAVVGRPLFHSLLLLLSLGLTVHLLWTRP) (removed in mature form).

It belongs to the RECK family. As to quaternary structure, interacts (via knot repeats) with WNT7A (via disordered linker region); the interaction is direct. Interacts (via knot repeats) with WNT7B (via disordered linker region); the interaction is direct. Interacts with ADGRA2; the interaction is direct. Interacts with MMP9.

It is found in the cell membrane. Its function is as follows. Functions together with ADGRA2 to enable brain endothelial cells to selectively respond to Wnt7 signals (WNT7A or WNT7B). Plays a key role in Wnt7-specific responses: required for central nervous system (CNS) angiogenesis and blood-brain barrier regulation. Acts as a Wnt7-specific coactivator of canonical Wnt signaling by decoding Wnt ligands: acts by interacting specifically with the disordered linker region of Wnt7, thereby conferring ligand selectivity for Wnt7. ADGRA2 is then required to deliver RECK-bound Wnt7 to frizzled by assembling a higher-order RECK-ADGRA2-Fzd-LRP5-LRP6 complex. Also acts as a serine protease inhibitor: negatively regulates matrix metalloproteinase-9 (MMP9) by suppressing MMP9 secretion and by direct inhibition of its enzymatic activity. Also inhibits metalloproteinase activity of MMP2 and MMP14 (MT1-MMP). This chain is Reversion-inducing cysteine-rich protein with Kazal motifs, found in Mus musculus (Mouse).